Consider the following 453-residue polypeptide: Ribosome biogenesis protein YTM1 (453 aa).

The segment at 8 to 89 (VKLRFFTREQ…ETFLNVEYTR (82 aa)) is ubiquitin-like (UBL) domain. A sufficient for interaction with ERB1 and association with 66S pre-ribosomes region spans residues 99–453 (SFSNEDWVSS…INKGDNIFKS (355 aa)). WD repeat units lie at residues 101–139 (SNEDWVSSLDVGDNNKIISGSYDGVVRTWNLSGKIEKQY), 141–179 (GHSAPIRAVKYISNTRMVSGGNDRTLRLWKTKNEDLKQP), 199–237 (GHKAPVVSIDVSDNSRILSGSYDNTIGFWSTIYKEMTVV), 278–318 (SHTG…CIDT), 320–359 (TTSYSLLSLAQLPTLNLLACGSSARHITLHDPRIGSTSKI), 366–406 (GHKN…PMYT), and 417–453 (GVNDKVFAVNWSKNVGIISAGQDKKIQINKGDNIFKS).

It belongs to the WD repeat WDR12/YTM1 family. As to quaternary structure, component of the NOP7 complex, composed of ERB1, NOP7 and YTM1. The complex is held together by ERB1, which interacts with NOP7 via its N-terminal domain and with YTM1 via a high-affinity interaction between the seven-bladed beta-propeller domains of the 2 proteins. The NOP7 complex associates with the 66S pre-ribosome. Interacts (via UBL domain) with MDN1 (via VWFA/MIDAS domain).

Its subcellular location is the nucleus. It is found in the nucleolus. It localises to the nucleoplasm. Component of the NOP7 complex, which is required for maturation of the 25S and 5.8S ribosomal RNAs and formation of the 60S ribosome. This is Ribosome biogenesis protein YTM1 from Vanderwaltozyma polyspora (strain ATCC 22028 / DSM 70294 / BCRC 21397 / CBS 2163 / NBRC 10782 / NRRL Y-8283 / UCD 57-17) (Kluyveromyces polysporus).